The sequence spans 426 residues: Inhibin beta A chain (426 aa).

The signal sequence occupies residues M1–S20. The propeptide occupies S21–R310. N-linked (GlcNAc...) asparagine glycosylation is present at N165. Residues K259–S288 are disordered. Residues K263 to G274 are compositionally biased toward basic and acidic residues. 4 cysteine pairs are disulfide-bonded: C314/C322, C321/C391, C350/C423, and C354/C425.

This sequence belongs to the TGF-beta family. Dimeric, linked by one or more disulfide bonds. Inhibin A is a dimer of alpha/INHA and beta-A/INHBA. Activin A is a homodimer of beta-A/INHBA. Activin AB is a dimer of beta-A/INHBA and beta-B/INHBB. Interacts with FST and FSTL3; these interactions prevent activin A interaction to its type II receptor. Activin A interacts with ACVR2A. Activin A interacts with BMPR2. Inhibin A interacts with ACVR1; this interaction creates a non-signaling complex (NSC) that inhibits ACVR1-mediated BMP signaling. Inhibin A interacts with ACVR2A.

Its subcellular location is the secreted. In terms of biological role, inhibins/activins are involved in regulating a number of diverse functions such as hypothalamic and pituitary hormone secretion, gonadal hormone secretion, germ cell development and maturation, erythroid differentiation, insulin secretion, nerve cell survival, embryonic axial development or bone growth, depending on their subunit composition. Activin A is a homodimer of INHBA that plays a role in several essential biological processes including embryonic development, stem cell maintenance and differentiation, haematopoiesis, cell proliferation and tissue fibrosis. Signals through type I (such as ACVR1B or ACVR1C) and type II receptors (such as ACVR2A, ACVR2B or BMPR2) which, upon ligand binding, phosphorylate SMAD2 and SMAD3 intracellular signaling mediators that form a complex with SMAD4, translocate to the nucleus and modulate gene expression. Can also activate alternative non-canonical intracellular signaling pathways including the p38 MAPK, extracellular signal-regulated kinases 1/2 (ERK1/2) and c-Jun N-terminal kinases (JNKs) to modulate cell migration and differentiation. Alternatively, promotes osteoblastic differentiation via ACVRL1-SMAD1/5/9 pathway. In addition, can engage the type I receptor ACVR1 to form an ACVR1-activin A-type II receptor non-signaling complex (NSC) that renders receptors unavailable for engagement with BMPs, hence resulting in an apparent inhibition of ACVR1-mediated BMP signaling. Functionally, inhibin A is a dimer of alpha/INHA and beta-A/INHBA that functions as a feedback regulator in the hypothalamic-pituitary-gonadal (HPG) axis. Inhibits the secretion of FSH from the anterior pituitary gland by acting on pituitary gonadotrope cells. Antagonizes activin A by binding to the proteoglycan, betaglycan, and forming a stable complex with and, thereby, sequestering type II activin receptors while excluding type I receptor. The protein is Inhibin beta A chain (INHBA) of Homo sapiens (Human).